The chain runs to 653 residues: Chromosomal replication initiator protein DnaA (653 aa).

Residues Met1–Ser100 are domain I, interacts with DnaA modulators. Residues Ile86–Pro310 form a disordered region. The tract at residues Pro101–Ala312 is domain II. 2 stretches are compositionally biased toward basic and acidic residues: residues Asp120–Gln150 and Pro221–Ile267. Low complexity predominate over residues Gly284–Pro310. Residues Arg313–Ala529 are domain III, AAA+ region. 4 residues coordinate ATP: Gly357, Gly359, Lys360, and Thr361. Residues Ser530–Gly653 are domain IV, binds dsDNA.

The protein belongs to the DnaA family. As to quaternary structure, oligomerizes as a right-handed, spiral filament on DNA at oriC.

The protein localises to the cytoplasm. Plays an essential role in the initiation and regulation of chromosomal replication. ATP-DnaA binds to the origin of replication (oriC) to initiate formation of the DNA replication initiation complex once per cell cycle. Binds the DnaA box (a 9 base pair repeat at the origin) and separates the double-stranded (ds)DNA. Forms a right-handed helical filament on oriC DNA; dsDNA binds to the exterior of the filament while single-stranded (ss)DNA is stabiized in the filament's interior. The ATP-DnaA-oriC complex binds and stabilizes one strand of the AT-rich DNA unwinding element (DUE), permitting loading of DNA polymerase. After initiation quickly degrades to an ADP-DnaA complex that is not apt for DNA replication. Binds acidic phospholipids. This is Chromosomal replication initiator protein DnaA from Streptomyces avermitilis (strain ATCC 31267 / DSM 46492 / JCM 5070 / NBRC 14893 / NCIMB 12804 / NRRL 8165 / MA-4680).